The chain runs to 176 residues: RNA pyrophosphohydrolase (176 aa).

The 144-residue stretch at 6-149 folds into the Nudix hydrolase domain; it reads GYRPNVGIVI…KRDVYRRVMK (144 aa). A Nudix box motif is present at residues 38-59; sequence GGINPGESAEQAMYRELFEEVG.

It belongs to the Nudix hydrolase family. RppH subfamily. A divalent metal cation is required as a cofactor.

Functionally, accelerates the degradation of transcripts by removing pyrophosphate from the 5'-end of triphosphorylated RNA, leading to a more labile monophosphorylated state that can stimulate subsequent ribonuclease cleavage. In Salmonella arizonae (strain ATCC BAA-731 / CDC346-86 / RSK2980), this protein is RNA pyrophosphohydrolase.